The chain runs to 857 residues: Cadherin-related family member 1a (857 aa).

A signal peptide spans 1 to 25; the sequence is MKNAREIQFSSFLLLAHFCFVGAQS. Over 26-709 the chain is Extracellular; the sequence is DYAPYFYDNG…RENPMHFLGL (684 aa). Cadherin domains are found at residues 40–139, 140–252, 253–359, 365–478, 479–582, and 574–693; these read NGNM…RPQF, QNMP…PPIF, IGTP…PPTF, PQNV…APKF, TSDF…PPAF, and DLND…GPLT. The helical transmembrane segment at 710–730 threads the bilayer; the sequence is ISGVILILVFVTVIISTVIFV. Topologically, residues 731–857 are cytoplasmic; it reads RRNKANRILP…LEQKNMANRY (127 aa). Positions 746–765 are disordered; it reads RKKRKPQKQDDFQEPFREEQ. Over residues 752–765 the composition is skewed to basic and acidic residues; sequence QKQDDFQEPFREEQ.

As to expression, expressed in photoreceptor cells of the outer nuclear layer of the retina and in the pinal gland.

The protein localises to the membrane. In terms of biological role, potential calcium-dependent cell-adhesion protein. Plays a role in the organization of retinal cell layers and Muller glia morphology. The polypeptide is Cadherin-related family member 1a (Danio rerio (Zebrafish)).